The chain runs to 76 residues: MTAIIVYSCLTMCVIYFHLQLKTFFTKLIRFCKKCFDIFLLLIEMLKLIFYLLIINNKFYIFIIISIALITINTMI.

A run of 3 helical transmembrane segments spans residues 1–21 (MTAIIVYSCLTMCVIYFHLQL), 35–55 (CFDIFLLLIEMLKLIFYLLII), and 56–76 (NNKFYIFIIISIALITINTMI).

It is found in the cell membrane. This is an uncharacterized protein from Borreliella burgdorferi (strain ATCC 35210 / DSM 4680 / CIP 102532 / B31) (Borrelia burgdorferi).